The primary structure comprises 377 residues: N-acetyldiaminopimelate deacetylase (377 aa).

Residue D69 is part of the active site. The active-site Proton acceptor is E128.

This sequence belongs to the peptidase M20A family. N-acetyldiaminopimelate deacetylase subfamily.

It carries out the reaction N-acetyl-(2S,6S)-2,6-diaminopimelate + H2O = (2S,6S)-2,6-diaminopimelate + acetate. It functions in the pathway amino-acid biosynthesis; L-lysine biosynthesis via DAP pathway; LL-2,6-diaminopimelate from (S)-tetrahydrodipicolinate (acetylase route): step 3/3. In terms of biological role, catalyzes the conversion of N-acetyl-diaminopimelate to diaminopimelate and acetate. The sequence is that of N-acetyldiaminopimelate deacetylase from Brevibacillus brevis (strain 47 / JCM 6285 / NBRC 100599).